Here is a 368-residue protein sequence, read N- to C-terminus: H-2 class I histocompatibility antigen, D-P alpha chain (368 aa).

An N-terminal signal peptide occupies residues 1 to 21 (MAPRTLLLLLAAALAPTQTRA). The segment at 22–111 (GPHSLRYFVT…LLGYYNQSKG (90 aa)) is alpha-1. Residues 22-303 (GPHSLRYFVT…RWEPPPSTDS (282 aa)) are Extracellular-facing. Asn107 carries an N-linked (GlcNAc...) asparagine glycan. The alpha-2 stretch occupies residues 112–203 (GSHTIQGMRG…ELGNATLLCT (92 aa)). Residues Cys122 and Cys185 are joined by a disulfide bond. Residues Asn197 and Asn277 are each glycosylated (N-linked (GlcNAc...) asparagine). The interval 204-295 (DPPKAHVTHH…GLPEPLTLRW (92 aa)) is alpha-3. Residues 206 to 294 (PKAHVTHHPR…EGLPEPLTLR (89 aa)) enclose the Ig-like C1-type domain. Cysteines 224 and 280 form a disulfide. A connecting peptide region spans residues 296 to 303 (EPPPSTDS). Residues 304 to 330 (YMVIVAVLVVLGAVFIIGAVVAFVMMM) traverse the membrane as a helical segment. Residues 331–368 (RRNTGGKGGDYTLAPGSQSSEMSLRDCKVMVHDSHSLA) are Cytoplasmic-facing. Ser350 and Ser353 each carry phosphoserine.

Belongs to the MHC class I family. As to quaternary structure, heterodimer of an alpha chain and a beta chain (beta-2-microglobulin).

The protein localises to the membrane. Functionally, involved in the presentation of foreign antigens to the immune system. This is H-2 class I histocompatibility antigen, D-P alpha chain (H2-D1) from Mus musculus (Mouse).